A 197-amino-acid polypeptide reads, in one-letter code: Lymphotoxin-alpha (197 aa).

The N-terminal stretch at 1-26 (MTPPGRLYLPLLLGLLLAPPPPGAQG) is a signal peptide. Positions 55–197 (PAAHLVGDPS…SSVFFGAFAL (143 aa)) constitute a THD domain. An N-linked (GlcNAc...) asparagine glycan is attached at Asn-88. A disulfide bond links Cys-112 and Cys-148.

It belongs to the tumor necrosis factor family. Homotrimer, and heterotrimer of either two LTB and one LTA subunits or (less prevalent) two LTA and one LTB subunits. Interacts with TNFRSF14.

It localises to the secreted. Its subcellular location is the membrane. Functionally, cytokine that in its homotrimeric form binds to TNFRSF1A/TNFR1, TNFRSF1B/TNFBR and TNFRSF14/HVEM. In its heterotrimeric form with LTB binds to TNFRSF3/LTBR. Lymphotoxin is produced by lymphocytes and is cytotoxic for a wide range of tumor cells in vitro and in vivo. The protein is Lymphotoxin-alpha (LTA) of Oryctolagus cuniculus (Rabbit).